Here is a 289-residue protein sequence, read N- to C-terminus: Protease HtpX homolog (289 aa).

The next 2 helical transmembrane spans lie at 10–30 (TAAL…VIGS) and 34–54 (STTP…YGYW). His138 is a Zn(2+) binding site. The active site involves Glu139. Position 142 (His142) interacts with Zn(2+). The next 2 membrane-spanning stretches (helical) occupy residues 153–173 (VAAA…IFGG) and 182–202 (LAVM…QSAI). Glu207 provides a ligand contact to Zn(2+).

It belongs to the peptidase M48B family. It depends on Zn(2+) as a cofactor.

Its subcellular location is the cell membrane. The chain is Protease HtpX homolog from Arthrobacter sp. (strain FB24).